Consider the following 229-residue polypeptide: Large ribosomal RNA subunit accumulation protein YCED homolog 2, chloroplastic (229 aa).

Residues 1–42 constitute a chloroplast transit peptide; the sequence is MDVRCLISPNLLNSKIKVSGNTHHLPFSSLSKKHQASSPIQA.

It belongs to the DUF177 domain family.

The protein localises to the plastid. It is found in the chloroplast. May play a role in synthesis, processing and/or stability of 23S rRNA. The polypeptide is Large ribosomal RNA subunit accumulation protein YCED homolog 2, chloroplastic (Arabidopsis thaliana (Mouse-ear cress)).